Here is a 1205-residue protein sequence, read N- to C-terminus: Nitric oxide synthase 3 (1205 aa).

2 disordered regions span residues 1 to 20 (MGNLKSVGQEPGPPCGLGLG) and 26 to 73 (CGKQ…FPRV). Residues 33 to 47 (SPAPEPSWAPAPATP) show a composition bias toward pro residues. Positions 96 and 101 each coordinate Zn(2+). Positions 100 to 489 (RCLGSLVLPR…PDPWKGSAAK (390 aa)) are interaction with NOSIP. Position 104 (serine 104) interacts with (6R)-L-erythro-5,6,7,8-tetrahydrobiopterin. Serine 116 is subject to Phosphoserine. Residue cysteine 186 participates in heme b binding. Positions 250, 359, 360, and 364 each coordinate L-arginine. Residue arginine 368 coordinates (6R)-L-erythro-5,6,7,8-tetrahydrobiopterin. Asparagine 369 is an L-arginine binding site. Positions 449, 450, and 463 each coordinate (6R)-L-erythro-5,6,7,8-tetrahydrobiopterin. Tyrosine 478 is a binding site for heme b. Threonine 498 bears the Phosphothreonine mark. Residues serine 529, glutamate 530, threonine 531, arginine 533, serine 575, and threonine 576 each contribute to the FMN site. A phosphoserine mark is found at serine 618, serine 636, and serine 641. FMN contacts are provided by serine 657, cysteine 664, glutamate 690, and glutamine 694. Position 781 (arginine 781) interacts with NADP(+). Residues 796 to 850 (LQYQPGDHISPHPPPRSSHRPGQGGPRVAPFSERPLMPRTPPPGGPPPSWVRDPR) form a disordered region. Histidine 803 serves as a coordination point for FAD. The span at 833–844 (PRTPPPGGPPPS) shows a compositional bias: pro residues. The FAD site is built by arginine 939, tyrosine 941, serine 942, threonine 957, and alanine 959. The NADP(+) site is built by threonine 1018, arginine 1051, serine 1080, arginine 1081, lysine 1087, tyrosine 1089, and glutamine 1091. Phosphothreonine is present on threonine 1177. 2 positions are modified to phosphoserine: serine 1179 and serine 1181.

Belongs to the NOS family. In terms of assembly, homodimer. Interacts with NOSIP and NOSTRIN. Interacts with HSP90AB1. Forms a complex with ASL, ASS1 and SLC7A1; the complex regulates cell-autonomous L-arginine synthesis and citrulline recycling while channeling extracellular L-arginine to nitric oxide synthesis pathway. Heme b serves as cofactor. FAD is required as a cofactor. It depends on FMN as a cofactor. Requires (6R)-L-erythro-5,6,7,8-tetrahydrobiopterin as cofactor.

It is found in the membrane. The protein resides in the caveola. It localises to the cytoplasm. Its subcellular location is the cytoskeleton. The protein localises to the golgi apparatus. It is found in the cell membrane. It catalyses the reaction 2 L-arginine + 3 NADPH + 4 O2 + H(+) = 2 L-citrulline + 2 nitric oxide + 3 NADP(+) + 4 H2O. Stimulated by calcium/calmodulin. Inhibited by NOSIP and NOSTRIN. Its function is as follows. Produces nitric oxide (NO) which is implicated in vascular smooth muscle relaxation through a cGMP-mediated signal transduction pathway. NO mediates vascular endothelial growth factor (VEGF)-induced angiogenesis in coronary vessels and promotes blood clotting through the activation of platelets. In Ovis aries (Sheep), this protein is Nitric oxide synthase 3 (NOS3).